We begin with the raw amino-acid sequence, 141 residues long: Transcriptional regulator MraZ (141 aa).

SpoVT-AbrB domains lie at E5–R47 and A76–H119.

Belongs to the MraZ family. Forms oligomers.

Its subcellular location is the cytoplasm. The protein localises to the nucleoid. This Lactiplantibacillus plantarum (strain ATCC BAA-793 / NCIMB 8826 / WCFS1) (Lactobacillus plantarum) protein is Transcriptional regulator MraZ.